The following is a 119-amino-acid chain: Large ribosomal subunit protein uL18 (119 aa).

Residues 1–22 are disordered; it reads MGHVEKVARRHKIKTRSKARGQ. Over residues 8-19 the composition is skewed to basic residues; it reads ARRHKIKTRSKA.

This sequence belongs to the universal ribosomal protein uL18 family. In terms of assembly, part of the 50S ribosomal subunit; part of the 5S rRNA/L5/L18/L25 subcomplex. Contacts the 5S and 23S rRNAs.

Functionally, this is one of the proteins that bind and probably mediate the attachment of the 5S RNA into the large ribosomal subunit, where it forms part of the central protuberance. This Chlorobium phaeobacteroides (strain BS1) protein is Large ribosomal subunit protein uL18.